We begin with the raw amino-acid sequence, 209 residues long: Small ribosomal subunit protein uS4 (209 aa).

Residues 99–161 (CRLDNIAFRL…SSKLVVVEMG (63 aa)) form the S4 RNA-binding domain.

Belongs to the universal ribosomal protein uS4 family. As to quaternary structure, part of the 30S ribosomal subunit. Contacts protein S5. The interaction surface between S4 and S5 is involved in control of translational fidelity.

Functionally, one of the primary rRNA binding proteins, it binds directly to 16S rRNA where it nucleates assembly of the body of the 30S subunit. In terms of biological role, with S5 and S12 plays an important role in translational accuracy. This Acidobacterium capsulatum (strain ATCC 51196 / DSM 11244 / BCRC 80197 / JCM 7670 / NBRC 15755 / NCIMB 13165 / 161) protein is Small ribosomal subunit protein uS4.